A 137-amino-acid polypeptide reads, in one-letter code: uncharacterized protein (137 aa).

The 70-residue stretch at 4–73 (MLTVSEVARK…LEEIADILHL (70 aa)) folds into the HTH merR-type domain. Positions 8–27 (SEVARKLGLNPQTLYFYERI) form a DNA-binding region, H-T-H motif.

This is an uncharacterized protein from Synechocystis sp. (strain ATCC 27184 / PCC 6803 / Kazusa).